The chain runs to 280 residues: Urease accessory protein UreD (280 aa).

This sequence belongs to the UreD family. UreD, UreF and UreG form a complex that acts as a GTP-hydrolysis-dependent molecular chaperone, activating the urease apoprotein by helping to assemble the nickel containing metallocenter of UreC. The UreE protein probably delivers the nickel.

It is found in the cytoplasm. Required for maturation of urease via the functional incorporation of the urease nickel metallocenter. This is Urease accessory protein UreD from Pseudomonas aeruginosa (strain UCBPP-PA14).